The primary structure comprises 144 residues: Probable copper-binding protein PcoE (144 aa).

A signal peptide spans 1-20; sequence MKKILVSFVAIMAVASSAMA. The interval 86–144 is disordered; sequence MHKKMMKSKPAASNETAKSFSEMNEHEKSAVVHEKANNGQSSVIHQQQAEKHRSQITQN. Polar residues predominate over residues 96–107; the sequence is AASNETAKSFSE. The segment covering 108-121 has biased composition (basic and acidic residues); it reads MNEHEKSAVVHEKA. Over residues 122 to 132 the composition is skewed to polar residues; that stretch reads NNGQSSVIHQQ.

The protein to S.typhimurium SilE.

The protein localises to the periplasm. Required for the copper-inducible expression of copper resistance. Activated by the two-component regulatory system CusS/CusR. This Escherichia coli protein is Probable copper-binding protein PcoE (pcoE).